Here is a 250-residue protein sequence, read N- to C-terminus: MNTRASNFLAASFSTIMLVGAFSLPAFAQENQMTTQPARIAVTGEGMMTASPDMAILNLSVLRQAKTAREAMTANNEAMTKVLDAMKKAGIEDRDLQTGGIDIQPIYVYPDDKNNLKEPTITGYSVSTSLTVRVRELANVGKILDESVTLGVNQGGDLNLVNDNPSAVINEARKRAVANAIAKAKTLADAAGVGLGRVVEISELSRPPMPMPIARGQFRTMLAAAPDNSVPIAAGENSYNVSVNVVFEIK.

Residues 1-28 form the signal peptide; it reads MNTRASNFLAASFSTIMLVGAFSLPAFA.

Its subcellular location is the periplasm. The protein is 26 kDa periplasmic immunogenic protein (bp26) of Brucella abortus (strain S19).